A 102-amino-acid polypeptide reads, in one-letter code: Putative pterin-4-alpha-carbinolamine dehydratase (102 aa).

The protein belongs to the pterin-4-alpha-carbinolamine dehydratase family.

The catalysed reaction is (4aS,6R)-4a-hydroxy-L-erythro-5,6,7,8-tetrahydrobiopterin = (6R)-L-erythro-6,7-dihydrobiopterin + H2O. In Psychromonas ingrahamii (strain DSM 17664 / CCUG 51855 / 37), this protein is Putative pterin-4-alpha-carbinolamine dehydratase.